Reading from the N-terminus, the 181-residue chain is Histone H1 (181 aa).

Disordered regions lie at residues 1–23 (MTET…THPP) and 81–181 (TKGA…PKKK). A compositionally biased stretch (basic residues) spans 8-19 (KPKKVSKPKAKP). Residues 20–94 (THPPTSVMVM…GASGSFKLAA (75 aa)) enclose the H15 domain. Composition is skewed to basic residues over residues 103–119 (AVAK…KAAA) and 145–181 (KPKK…PKKK).

This sequence belongs to the histone H1/H5 family.

The protein resides in the nucleus. It is found in the chromosome. Its function is as follows. Histones H1 are necessary for the condensation of nucleosome chains into higher-order structures. In Tigriopus californicus (Marine copepod), this protein is Histone H1.